A 301-amino-acid chain; its full sequence is GTP cyclohydrolase FolE2 (301 aa).

It belongs to the GTP cyclohydrolase IV family.

It carries out the reaction GTP + H2O = 7,8-dihydroneopterin 3'-triphosphate + formate + H(+). The protein operates within cofactor biosynthesis; 7,8-dihydroneopterin triphosphate biosynthesis; 7,8-dihydroneopterin triphosphate from GTP: step 1/1. In terms of biological role, converts GTP to 7,8-dihydroneopterin triphosphate. The protein is GTP cyclohydrolase FolE2 of Pseudomonas putida (strain GB-1).